The following is a 600-amino-acid chain: Phosphoenolpyruvate carboxykinase (ATP) (600 aa).

302 to 309 (GLSGTGKT) contributes to the ATP binding site.

Belongs to the phosphoenolpyruvate carboxykinase (ATP) family.

The catalysed reaction is oxaloacetate + ATP = phosphoenolpyruvate + ADP + CO2. Its pathway is carbohydrate biosynthesis; gluconeogenesis. The chain is Phosphoenolpyruvate carboxykinase (ATP) (acuF) from Emericella nidulans (strain FGSC A4 / ATCC 38163 / CBS 112.46 / NRRL 194 / M139) (Aspergillus nidulans).